The following is a 553-amino-acid chain: MPTEPETDYDPELGRKFIFVTGGVMSGLGKGITAASTGRLLKNAGFDVTAVKIDPYLNVDAGTMNPFQHGEVYVLKDGGEVDLDLGNYERFLDIDMTFDHNVTTGKTYQHVIEKERSGDYLGRTVQIIPHITDDIKRRIREAAEGNDVCIIEVGGTVGDIEGMPYLEALRQFAHEEDEDDILFTHVTLVPYSKNGEQKTKPTQHSVKELRSIGLQPDILVGRCSDKLDIDTKEKIGLFCDVPTEAVFSNPDVDDIYHVPLMVEEEGLDQYVMEELDIASEALPEDERENRWRDLVTQNTEGEVEVALVGKYDLEDAYMSVHEALKHAGLEKNVDVNVRWVNSEKMNDHHADRMREADAIVVPGGFGARGTEGKIEAIRYARENDIPFLGLCLGFQMAVVEYARNVLDLDDAHSAELEEDTPHPVIDILPEQYEIEDMGGTMRLGAHETEINANTLAATLYGGESCTERHRHRYEVNPEYIDDLEAAGLKFSGRAGNRMEILELGPEDHPYFIGTQFHPEFRSRPTRASPPFVGLLEAVLGDDPHTATTEEVSH.

Residues 1–277 are amidoligase domain; the sequence is MPTEPETDYD…DQYVMEELDI (277 aa). Residue Ser26 participates in CTP binding. Position 26 (Ser26) interacts with UTP. ATP-binding positions include 27–32 and Asp84; that span reads GLGKGI. Asp84 and Glu152 together coordinate Mg(2+). CTP is bound by residues 159–161, 198–203, and Lys234; these read DIE and KTKPTQ. UTP is bound by residues 198 to 203 and Lys234; that span reads KTKPTQ. The 238-residue stretch at 307-544 folds into the Glutamine amidotransferase type-1 domain; it reads LVGKYDLEDA…LEAVLGDDPH (238 aa). Gly364 is a binding site for L-glutamine. Cys391 functions as the Nucleophile; for glutamine hydrolysis in the catalytic mechanism. Residues 392–395, Glu415, and Arg472 contribute to the L-glutamine site; that span reads LGFQ. Catalysis depends on residues His517 and Glu519.

It belongs to the CTP synthase family. In terms of assembly, homotetramer.

The catalysed reaction is UTP + L-glutamine + ATP + H2O = CTP + L-glutamate + ADP + phosphate + 2 H(+). It catalyses the reaction L-glutamine + H2O = L-glutamate + NH4(+). The enzyme catalyses UTP + NH4(+) + ATP = CTP + ADP + phosphate + 2 H(+). It functions in the pathway pyrimidine metabolism; CTP biosynthesis via de novo pathway; CTP from UDP: step 2/2. Its activity is regulated as follows. Allosterically activated by GTP, when glutamine is the substrate; GTP has no effect on the reaction when ammonia is the substrate. The allosteric effector GTP functions by stabilizing the protein conformation that binds the tetrahedral intermediate(s) formed during glutamine hydrolysis. Inhibited by the product CTP, via allosteric rather than competitive inhibition. Its function is as follows. Catalyzes the ATP-dependent amination of UTP to CTP with either L-glutamine or ammonia as the source of nitrogen. Regulates intracellular CTP levels through interactions with the four ribonucleotide triphosphates. The sequence is that of CTP synthase from Haloarcula marismortui (strain ATCC 43049 / DSM 3752 / JCM 8966 / VKM B-1809) (Halobacterium marismortui).